The primary structure comprises 70 residues: SWDSIWKSAKNKMDKIMRQKVAKWMAKKEGKSVEEVQAKVDAMSKKDIRMHVISHYGKKAFEQLSKSLEE.

It belongs to the cationic peptide 06 (cytoinsectotoxin) family. As to expression, expressed by the venom gland.

The protein localises to the secreted. In terms of biological role, insecticidal and antimicrobial peptide. Has insecticidal activity against larvae of flesh fly S.carnaria. Has antibacterial activity against Gram-positive bacterium B.subtilis B-501 (MIC=1.25 uM) and Gram-negative bacterium E.coli DH5alpha (MIC=2.5 uM). The polypeptide is Cytoinsectotoxin-2c (Lachesana tarabaevi (Spider)).